The sequence spans 262 residues: uncharacterized protein (262 aa).

The next 6 membrane-spanning stretches (helical) occupy residues 7 to 27 (LAVA…LAHM), 58 to 78 (DTLG…IVFG), 114 to 134 (FLAF…VLGG), 140 to 160 (GGFQ…IAFG), 179 to 199 (GALG…YYLF), and 216 to 236 (IITA…VLAG).

The protein localises to the cell membrane. This is an uncharacterized protein from Methanocaldococcus jannaschii (strain ATCC 43067 / DSM 2661 / JAL-1 / JCM 10045 / NBRC 100440) (Methanococcus jannaschii).